An 880-amino-acid chain; its full sequence is Valine--tRNA ligase (880 aa).

Residues 51-61 carry the 'HIGH' region motif; sequence PNVTGELHLGH. The 'KMSKS' region signature appears at 529-533; it reads KMSKT. Lys-532 lines the ATP pocket. Positions 815–854 form a coiled coil; that stretch reads MSTMVDLEAEAKRVEAEIAELETQIERLSARLSDTQFLAK.

The protein belongs to the class-I aminoacyl-tRNA synthetase family. ValS type 1 subfamily. Monomer.

It is found in the cytoplasm. The enzyme catalyses tRNA(Val) + L-valine + ATP = L-valyl-tRNA(Val) + AMP + diphosphate. Catalyzes the attachment of valine to tRNA(Val). As ValRS can inadvertently accommodate and process structurally similar amino acids such as threonine, to avoid such errors, it has a 'posttransfer' editing activity that hydrolyzes mischarged Thr-tRNA(Val) in a tRNA-dependent manner. The protein is Valine--tRNA ligase of Dehalococcoides mccartyi (strain ATCC BAA-2266 / KCTC 15142 / 195) (Dehalococcoides ethenogenes (strain 195)).